Reading from the N-terminus, the 380-residue chain is Cytochrome b (380 aa).

The next 4 membrane-spanning stretches (helical) occupy residues 34-54, 78-99, 114-134, and 179-199; these read FGSLLGICLATQILTGLLLAA, WLIRNLHANGASFFFICIYLHI, WNTGVILLLTLMATAFVGYVL, and FFTLHFLLPFMIMGLTLIHLT. Heme b-binding residues include His84 and His98. The heme b site is built by His183 and His197. His202 contributes to the a ubiquinone binding site. 4 helical membrane passes run 227–247, 289–309, 321–341, and 348–368; these read LKDILGFMLMLLPLMTLALFS, LGGVLALAASVLILFLAPLLH, FSQLLFWTLTANLLILTWVGS, and FIIIGQLASLTYFTILLILFP.

Belongs to the cytochrome b family. The cytochrome bc1 complex contains 11 subunits: 3 respiratory subunits (MT-CYB, CYC1 and UQCRFS1), 2 core proteins (UQCRC1 and UQCRC2) and 6 low-molecular weight proteins (UQCRH/QCR6, UQCRB/QCR7, UQCRQ/QCR8, UQCR10/QCR9, UQCR11/QCR10 and a cleavage product of UQCRFS1). This cytochrome bc1 complex then forms a dimer. Heme b serves as cofactor.

It localises to the mitochondrion inner membrane. In terms of biological role, component of the ubiquinol-cytochrome c reductase complex (complex III or cytochrome b-c1 complex) that is part of the mitochondrial respiratory chain. The b-c1 complex mediates electron transfer from ubiquinol to cytochrome c. Contributes to the generation of a proton gradient across the mitochondrial membrane that is then used for ATP synthesis. This Antigone rubicunda (Brolga crane) protein is Cytochrome b (MT-CYB).